We begin with the raw amino-acid sequence, 114 residues long: MEMFGKIACFVVFCMVVVAPHAESLSCGEVTSGLAPCLPYLEGRGPLGGCCGGVKGLLGAAKTPEDRKTACTCLKSAANSIKGIDTGKAAGLPGVCGVNIPYKISPSTDCSTVQ.

The first 23 residues, 1 to 23 (MEMFGKIACFVVFCMVVVAPHAE), serve as a signal peptide directing secretion. 4 cysteine pairs are disulfide-bonded: Cys27–Cys73, Cys37–Cys50, Cys51–Cys96, and Cys71–Cys110.

Belongs to the plant LTP family.

Plant non-specific lipid-transfer proteins transfer phospholipids as well as galactolipids across membranes. May play a role in wax or cutin deposition in the cell walls of expanding epidermal cells and certain secretory tissues. This chain is Non-specific lipid-transfer protein 2 (LE16), found in Solanum lycopersicum (Tomato).